The chain runs to 109 residues: Parvalbumin, thymic (109 aa).

At A2 the chain carries N-acetylalanine. EF-hand domains are found at residues 39-74 (KTPD…FSSS) and 78-109 (LTSA…LVKA). Ca(2+) contacts are provided by D52, D54, S56, E63, D91, D93, D95, K97, and E102.

It belongs to the parvalbumin family.

In terms of biological role, appears to promote immune maturation in bone marrow cells in culture. Binds two calcium ions. This Gallus gallus (Chicken) protein is Parvalbumin, thymic.